Here is an 848-residue protein sequence, read N- to C-terminus: Leucine--tRNA ligase (848 aa).

A compositionally biased stretch (basic and acidic residues) spans 1–16; that stretch reads MCPEQPHDTRAERDEM. The segment at 1–30 is disordered; the sequence is MCPEQPHDTRAERDEMSEQTQQAAQPAETA. Positions 18 to 30 are enriched in low complexity; sequence EQTQQAAQPAETA. Positions 69-79 match the 'HIGH' region motif; the sequence is PYPSGDLHMGH. The 'KMSKS' region motif lies at 614-618; sequence KMSKS. ATP is bound at residue Lys617.

It belongs to the class-I aminoacyl-tRNA synthetase family.

Its subcellular location is the cytoplasm. It carries out the reaction tRNA(Leu) + L-leucine + ATP = L-leucyl-tRNA(Leu) + AMP + diphosphate. In Nocardioides sp. (strain ATCC BAA-499 / JS614), this protein is Leucine--tRNA ligase.